The primary structure comprises 372 residues: Glutamate 5-kinase (372 aa).

Position 14 (K14) interacts with ATP. Positions 54, 141, and 153 each coordinate substrate. Residues 173 to 174 (TD) and 215 to 221 (TGGMATK) each bind ATP. Positions 280-358 (KGKLVLDVGA…DEIESLLGYD (79 aa)) constitute a PUA domain.

Belongs to the glutamate 5-kinase family.

The protein resides in the cytoplasm. The catalysed reaction is L-glutamate + ATP = L-glutamyl 5-phosphate + ADP. It functions in the pathway amino-acid biosynthesis; L-proline biosynthesis; L-glutamate 5-semialdehyde from L-glutamate: step 1/2. Functionally, catalyzes the transfer of a phosphate group to glutamate to form L-glutamate 5-phosphate. This chain is Glutamate 5-kinase, found in Shewanella woodyi (strain ATCC 51908 / MS32).